We begin with the raw amino-acid sequence, 247 residues long: Small ribosomal subunit protein uS3 (247 aa).

In terms of domain architecture, KH type-2 spans 38 to 106 (IRDFLSEGLD…QVQLNILEVK (69 aa)). Basic and acidic residues predominate over residues 214-226 (SLMNARDERPSRG). A disordered region spans residues 214-247 (SLMNARDERPSRGRRERPRRGGARRQRAEQKQEG). The segment covering 227-238 (RRERPRRGGARR) has biased composition (basic residues).

It belongs to the universal ribosomal protein uS3 family. As to quaternary structure, part of the 30S ribosomal subunit. Forms a tight complex with proteins S10 and S14.

Binds the lower part of the 30S subunit head. Binds mRNA in the 70S ribosome, positioning it for translation. This is Small ribosomal subunit protein uS3 from Corynebacterium jeikeium (strain K411).